Reading from the N-terminus, the 699-residue chain is Elongation factor G (699 aa).

The tr-type G domain occupies 8–290 (NRYRNIGICA…AVIEFLPAPD (283 aa)). Residues 17–24 (AHVDAGKT), 88–92 (DTPGH), and 142–145 (NKMD) contribute to the GTP site.

It belongs to the TRAFAC class translation factor GTPase superfamily. Classic translation factor GTPase family. EF-G/EF-2 subfamily.

It localises to the cytoplasm. Its function is as follows. Catalyzes the GTP-dependent ribosomal translocation step during translation elongation. During this step, the ribosome changes from the pre-translocational (PRE) to the post-translocational (POST) state as the newly formed A-site-bound peptidyl-tRNA and P-site-bound deacylated tRNA move to the P and E sites, respectively. Catalyzes the coordinated movement of the two tRNA molecules, the mRNA and conformational changes in the ribosome. The polypeptide is Elongation factor G (Alcanivorax borkumensis (strain ATCC 700651 / DSM 11573 / NCIMB 13689 / SK2)).